The following is a 125-amino-acid chain: Phosphoribosyl-AMP cyclohydrolase (125 aa).

Position 91 (Asp-91) interacts with Mg(2+). Cys-92 contacts Zn(2+). The Mg(2+) site is built by Asp-93 and Asp-95. 2 residues coordinate Zn(2+): Cys-108 and Cys-115.

The protein belongs to the PRA-CH family. As to quaternary structure, homodimer. Requires Mg(2+) as cofactor. The cofactor is Zn(2+).

It is found in the cytoplasm. It carries out the reaction 1-(5-phospho-beta-D-ribosyl)-5'-AMP + H2O = 1-(5-phospho-beta-D-ribosyl)-5-[(5-phospho-beta-D-ribosylamino)methylideneamino]imidazole-4-carboxamide. The protein operates within amino-acid biosynthesis; L-histidine biosynthesis; L-histidine from 5-phospho-alpha-D-ribose 1-diphosphate: step 3/9. In terms of biological role, catalyzes the hydrolysis of the adenine ring of phosphoribosyl-AMP. The sequence is that of Phosphoribosyl-AMP cyclohydrolase from Streptomyces griseus subsp. griseus (strain JCM 4626 / CBS 651.72 / NBRC 13350 / KCC S-0626 / ISP 5235).